We begin with the raw amino-acid sequence, 237 residues long: Urease accessory protein UreF (237 aa).

This sequence belongs to the UreF family. UreD, UreF and UreG form a complex that acts as a GTP-hydrolysis-dependent molecular chaperone, activating the urease apoprotein by helping to assemble the nickel containing metallocenter of UreC. The UreE protein probably delivers the nickel.

The protein localises to the cytoplasm. Its function is as follows. Required for maturation of urease via the functional incorporation of the urease nickel metallocenter. This Methylibium petroleiphilum (strain ATCC BAA-1232 / LMG 22953 / PM1) protein is Urease accessory protein UreF.